A 95-amino-acid chain; its full sequence is ESAT-6-like protein EsxC (95 aa).

Belongs to the WXG100 family. ESAT-6 subfamily.

It localises to the secreted. The protein is ESAT-6-like protein EsxC of Mycobacterium tuberculosis (strain CDC 1551 / Oshkosh).